A 69-amino-acid chain; its full sequence is DNA gyrase inhibitor YacG (69 aa).

Residues cysteine 7, cysteine 10, cysteine 26, and cysteine 30 each contribute to the Zn(2+) site.

It belongs to the DNA gyrase inhibitor YacG family. In terms of assembly, interacts with GyrB. It depends on Zn(2+) as a cofactor.

In terms of biological role, inhibits all the catalytic activities of DNA gyrase by preventing its interaction with DNA. Acts by binding directly to the C-terminal domain of GyrB, which probably disrupts DNA binding by the gyrase. This Shewanella putrefaciens (strain CN-32 / ATCC BAA-453) protein is DNA gyrase inhibitor YacG.